The following is a 183-amino-acid chain: 3-hydroxydecanoyl-[acyl-carrier-protein] dehydratase (183 aa).

H77 is a catalytic residue.

Belongs to the thioester dehydratase family. FabA subfamily. As to quaternary structure, homodimer.

It is found in the cytoplasm. The catalysed reaction is a (3R)-hydroxyacyl-[ACP] = a (2E)-enoyl-[ACP] + H2O. It catalyses the reaction (3R)-hydroxydecanoyl-[ACP] = (2E)-decenoyl-[ACP] + H2O. The enzyme catalyses (2E)-decenoyl-[ACP] = (3Z)-decenoyl-[ACP]. The protein operates within lipid metabolism; fatty acid biosynthesis. Necessary for the introduction of cis unsaturation into fatty acids. Catalyzes the dehydration of (3R)-3-hydroxydecanoyl-ACP to E-(2)-decenoyl-ACP and then its isomerization to Z-(3)-decenoyl-ACP. Can catalyze the dehydratase reaction for beta-hydroxyacyl-ACPs with saturated chain lengths up to 16:0, being most active on intermediate chain length. In Hahella chejuensis (strain KCTC 2396), this protein is 3-hydroxydecanoyl-[acyl-carrier-protein] dehydratase.